Here is a 255-residue protein sequence, read N- to C-terminus: Arginine-binding extracellular protein ArtP (255 aa).

Positions 1–19 are cleaved as a signal peptide; that stretch reads MKKWLLLLVAACITFALTA. The N-palmitoyl cysteine moiety is linked to residue Cys-20. Residue Cys-20 is the site of S-diacylglycerol cysteine attachment.

The protein belongs to the bacterial solute-binding protein 3 family.

It is found in the cell membrane. Its function is as follows. Part of a binding-protein-dependent transport system for arginine. The polypeptide is Arginine-binding extracellular protein ArtP (artP) (Bacillus subtilis (strain 168)).